Consider the following 126-residue polypeptide: MANLEKIVEDLSTLTVLEAAELAKLLEEKWGVSAAAAVAVAAGPAAGAAAAAPAEEQTEFTVVLAAFGDKKIEVIKEVRAVTGLGLKEAKDLVEAAPKPVKEGVTKEEAEKIKAALEKAGAKVELK.

This sequence belongs to the bacterial ribosomal protein bL12 family. In terms of assembly, homodimer. Part of the ribosomal stalk of the 50S ribosomal subunit. Forms a multimeric L10(L12)X complex, where L10 forms an elongated spine to which 2 to 4 L12 dimers bind in a sequential fashion. Binds GTP-bound translation factors.

Its function is as follows. Forms part of the ribosomal stalk which helps the ribosome interact with GTP-bound translation factors. Is thus essential for accurate translation. This is Large ribosomal subunit protein bL12 from Methylocella silvestris (strain DSM 15510 / CIP 108128 / LMG 27833 / NCIMB 13906 / BL2).